The chain runs to 489 residues: MAAAAARVVLLPAARRRLWGFSESLLIRGAAGRSSYFGENRLRSTQAATQVVLNVPETRVTCLESGLRVASEDSGLSTCTVGLWIDAGSRYENEKNNGTAHFLEHMAFKGTKKRSQLDLELEIENMGAHLNAYTSREQTVYYAKAFSKDLPRAVEILADIIQNSTLGEAEIERERGVILREMQEVETNLQEVVFDYLHATAYQNTALGRTILGPTENIKSISRKDLVDYITTHYKGPRIVLAAAGGVSHDELLDLAKFHFGDSLCTHKGEIPALPPCKFTGSEIRVRDDKMPLAHLAIAVEAVGWAHPDTICLMVANTLIGNWDRSFGGGMNLSSKLAQLTCHGNLCHSFQSFNTSYTDTGLWGLYMVCEPSTVADMLHVVQKEWMRLCTSVTESEVARARNLLKTNMLLQLDGSTPICEDIGRQMLCYNRRIPIPELEARIDAVNAETIREVCTKYIYNRSPAIAAVGPIEQLPDFKQICSNMCWLRD.

The N-terminal 45 residues, 1–45 (MAAAAARVVLLPAARRRLWGFSESLLIRGAAGRSSYFGENRLRST), are a transit peptide targeting the mitochondrion. Residue H101 participates in Zn(2+) binding. The Proton acceptor role is filled by E104. Zn(2+) is bound by residues H105 and E181.

Belongs to the peptidase M16 family. As to quaternary structure, heterodimer of PMPCA (alpha) and PMPCB (beta) subunits, forming the mitochondrial processing protease (MPP) in which PMPCA is involved in substrate recognition and binding and PMPCB is the catalytic subunit. Requires Zn(2+) as cofactor.

It localises to the mitochondrion matrix. The enzyme catalyses Release of N-terminal transit peptides from precursor proteins imported into the mitochondrion, typically with Arg in position P2.. Binding to PMPCA is required for catalytic activity. Catalytic subunit of the essential mitochondrial processing protease (MPP), which cleaves the mitochondrial sequence off newly imported precursors proteins. Preferentially, cleaves after an arginine at position P2. Required for PINK1 turnover by coupling PINK1 mitochondrial import and cleavage, which results in subsequent PINK1 proteolysis. The protein is Mitochondrial-processing peptidase subunit beta (PMPCB) of Pongo abelii (Sumatran orangutan).